Consider the following 45-residue polypeptide: DNA replication protein repEB (45 aa).

Involved in T4 DNA replication. Important for the priming of leading strand DNA synthesis at oriE. Binds to ssDNA. This chain is DNA replication protein repEB (repEB), found in Enterobacteria phage T4 (Bacteriophage T4).